We begin with the raw amino-acid sequence, 361 residues long: D-alanine--D-alanine ligase (361 aa).

Residues 134 to 344 (KLLLKSFNIP…FKDLVDNLIN (211 aa)) form the ATP-grasp domain. Residue 167 to 222 (REALGYPVIVKPAVLGSSIGINVAYSENQIEFFIEEALKYDLTILIEKFIEAREIE) participates in ATP binding. Aspartate 297, glutamate 311, and asparagine 313 together coordinate Mg(2+).

Belongs to the D-alanine--D-alanine ligase family. Mg(2+) serves as cofactor. Requires Mn(2+) as cofactor.

The protein resides in the cytoplasm. The catalysed reaction is 2 D-alanine + ATP = D-alanyl-D-alanine + ADP + phosphate + H(+). It participates in cell wall biogenesis; peptidoglycan biosynthesis. Cell wall formation. This is D-alanine--D-alanine ligase from Borrelia garinii subsp. bavariensis (strain ATCC BAA-2496 / DSM 23469 / PBi) (Borreliella bavariensis).